Consider the following 387-residue polypeptide: Exodeoxyribonuclease 7 large subunit (387 aa).

Belongs to the XseA family. Heterooligomer composed of large and small subunits.

The protein localises to the cytoplasm. The enzyme catalyses Exonucleolytic cleavage in either 5'- to 3'- or 3'- to 5'-direction to yield nucleoside 5'-phosphates.. Its function is as follows. Bidirectionally degrades single-stranded DNA into large acid-insoluble oligonucleotides, which are then degraded further into small acid-soluble oligonucleotides. This is Exodeoxyribonuclease 7 large subunit from Campylobacter jejuni subsp. jejuni serotype O:6 (strain 81116 / NCTC 11828).